The chain runs to 414 residues: Ribulose bisphosphate carboxylase large chain (414 aa).

Substrate is bound by residues N102 and T152. K154 functions as the Proton acceptor in the catalytic mechanism. K156 is a binding site for substrate. The Mg(2+) site is built by K180, D182, and E183. N6-carboxylysine is present on K180. The Proton acceptor role is filled by H273. R274, H306, and S358 together coordinate substrate.

It belongs to the RuBisCO large chain family. Type I subfamily. In terms of assembly, heterohexadecamer of 8 large chains and 8 small chains; disulfide-linked. The disulfide link is formed within the large subunit homodimers. Mg(2+) is required as a cofactor. In terms of processing, the disulfide bond which can form in the large chain dimeric partners within the hexadecamer appears to be associated with oxidative stress and protein turnover.

Its subcellular location is the plastid. The protein resides in the chloroplast. The catalysed reaction is 2 (2R)-3-phosphoglycerate + 2 H(+) = D-ribulose 1,5-bisphosphate + CO2 + H2O. It carries out the reaction D-ribulose 1,5-bisphosphate + O2 = 2-phosphoglycolate + (2R)-3-phosphoglycerate + 2 H(+). Its function is as follows. RuBisCO catalyzes two reactions: the carboxylation of D-ribulose 1,5-bisphosphate, the primary event in carbon dioxide fixation, as well as the oxidative fragmentation of the pentose substrate in the photorespiration process. Both reactions occur simultaneously and in competition at the same active site. The protein is Ribulose bisphosphate carboxylase large chain (rbcL) of Antrophyum reticulatum (Ox-tongue fern).